A 136-amino-acid polypeptide reads, in one-letter code: ATP synthase epsilon chain, chloroplastic (136 aa).

Belongs to the ATPase epsilon chain family. F-type ATPases have 2 components, CF(1) - the catalytic core - and CF(0) - the membrane proton channel. CF(1) has five subunits: alpha(3), beta(3), gamma(1), delta(1), epsilon(1). CF(0) has three main subunits: a, b and c.

It is found in the plastid. The protein resides in the chloroplast thylakoid membrane. Functionally, produces ATP from ADP in the presence of a proton gradient across the membrane. The chain is ATP synthase epsilon chain, chloroplastic from Tetradesmus obliquus (Green alga).